A 283-amino-acid chain; its full sequence is Elongation factor Ts (283 aa).

Positions Thr-79 to Val-82 are involved in Mg(2+) ion dislocation from EF-Tu.

It belongs to the EF-Ts family.

The protein resides in the cytoplasm. Its function is as follows. Associates with the EF-Tu.GDP complex and induces the exchange of GDP to GTP. It remains bound to the aminoacyl-tRNA.EF-Tu.GTP complex up to the GTP hydrolysis stage on the ribosome. This is Elongation factor Ts from Pseudoalteromonas translucida (strain TAC 125).